Consider the following 109-residue polypeptide: Ribonuclease P protein component 4 (109 aa).

Positions 65, 68, 94, and 97 each coordinate Zn(2+).

The protein belongs to the eukaryotic/archaeal RNase P protein component 4 family. As to quaternary structure, consists of a catalytic RNA component and at least 4-5 protein subunits. Zn(2+) serves as cofactor.

The protein localises to the cytoplasm. The catalysed reaction is Endonucleolytic cleavage of RNA, removing 5'-extranucleotides from tRNA precursor.. Part of ribonuclease P, a protein complex that generates mature tRNA molecules by cleaving their 5'-ends. The protein is Ribonuclease P protein component 4 of Methanococcus vannielii (strain ATCC 35089 / DSM 1224 / JCM 13029 / OCM 148 / SB).